The primary structure comprises 598 residues: Elongation factor 4 (598 aa).

The tr-type G domain occupies 4–185 (KNIRNFSIIA…TIITKIPAPK (182 aa)). GTP is bound by residues 16–21 (DHGKST) and 132–135 (NKID).

This sequence belongs to the TRAFAC class translation factor GTPase superfamily. Classic translation factor GTPase family. LepA subfamily.

The protein localises to the cell inner membrane. It carries out the reaction GTP + H2O = GDP + phosphate + H(+). Functionally, required for accurate and efficient protein synthesis under certain stress conditions. May act as a fidelity factor of the translation reaction, by catalyzing a one-codon backward translocation of tRNAs on improperly translocated ribosomes. Back-translocation proceeds from a post-translocation (POST) complex to a pre-translocation (PRE) complex, thus giving elongation factor G a second chance to translocate the tRNAs correctly. Binds to ribosomes in a GTP-dependent manner. This Campylobacter jejuni subsp. jejuni serotype O:2 (strain ATCC 700819 / NCTC 11168) protein is Elongation factor 4.